Reading from the N-terminus, the 136-residue chain is Globin-2 (136 aa).

Residues 1-134 (VSQADIAAVQ…ILSQMKIALS (134 aa)) enclose the Globin domain. Histidine 89 is a heme b binding site.

This sequence belongs to the globin family. In terms of assembly, homodimer.

In Phreagena soyoae (Deep-sea cold-seep clam), this protein is Globin-2.